A 278-amino-acid chain; its full sequence is MKIIEAVNIRYTYPDGTEALKGIDFHAKKGEVVALLGPNGAGKSTLFLHFNGILQPTSGKVLVDGKEIDYSKSGLIKVRQKVGIVFQNPDDQLFAPRVDEDVAFGPLNMGLDEDEVEERVKDALRKVGMSGYEDRPPHHLSGGEKKRVAIAGILAMKPDIMILDEPTSGLDPRGASQILRLLHELNEEGMTIIISTHDVDLAPLYSDRIYIISGGEIISEGTPGDVFSDIDTIRGADLRLPRIAHLVEILQKEDDLPFGEPYPLTIGEARRKLRDQLK.

The ABC transporter domain maps to 4–239 (IEAVNIRYTY…IDTIRGADLR (236 aa)). 37–44 (GPNGAGKS) contributes to the ATP binding site.

It belongs to the ABC transporter superfamily.

The protein resides in the cell membrane. Its function is as follows. Probably part of an ABC transporter complex. Responsible for energy coupling to the transport system. The protein is Putative ABC transporter ATP-binding protein MTBMA_c05830 of Methanothermobacter marburgensis (strain ATCC BAA-927 / DSM 2133 / JCM 14651 / NBRC 100331 / OCM 82 / Marburg) (Methanobacterium thermoautotrophicum).